We begin with the raw amino-acid sequence, 274 residues long: Ribosomal RNA small subunit methyltransferase A (274 aa).

S-adenosyl-L-methionine contacts are provided by histidine 15, leucine 17, glycine 42, glutamate 64, aspartate 89, and asparagine 109.

Belongs to the class I-like SAM-binding methyltransferase superfamily. rRNA adenine N(6)-methyltransferase family. RsmA subfamily.

It localises to the cytoplasm. The enzyme catalyses adenosine(1518)/adenosine(1519) in 16S rRNA + 4 S-adenosyl-L-methionine = N(6)-dimethyladenosine(1518)/N(6)-dimethyladenosine(1519) in 16S rRNA + 4 S-adenosyl-L-homocysteine + 4 H(+). Functionally, specifically dimethylates two adjacent adenosines (A1518 and A1519) in the loop of a conserved hairpin near the 3'-end of 16S rRNA in the 30S particle. May play a critical role in biogenesis of 30S subunits. This is Ribosomal RNA small subunit methyltransferase A from Synechococcus sp. (strain RCC307).